Reading from the N-terminus, the 116-residue chain is UPF0654 protein C869.09 (116 aa).

The disordered stretch occupies residues 32-116 (LKEHGSESHY…LLEEVDDESK (85 aa)). Residues 39–48 (SHYTTGTTRG) are compositionally biased toward polar residues. Basic and acidic residues predominate over residues 49 to 64 (QKADADDAGELREEGF).

This sequence belongs to the UPF0654 (con-6) family.

The protein resides in the cytoplasm. Its subcellular location is the nucleus. In Schizosaccharomyces pombe (strain 972 / ATCC 24843) (Fission yeast), this protein is UPF0654 protein C869.09.